A 458-amino-acid polypeptide reads, in one-letter code: RuvB-like helicase 1 (458 aa).

71 to 78 (GGPGTGKT) serves as a coordination point for ATP.

This sequence belongs to the RuvB family. May form heterododecamers with hel-2/rvb2. Component of the SWR1 chromatin remodeling complex, the INO80 chromatin remodeling complex, and of the R2TP complex.

The protein resides in the nucleus. The enzyme catalyses ATP + H2O = ADP + phosphate + H(+). Functionally, DNA helicase which participates in several chromatin remodeling complexes, including the SWR1 and the INO80 complexes. The SWR1 complex mediates the ATP-dependent exchange of histone H2A for the H2A variant H2A.Z leading to transcriptional regulation of selected genes by chromatin remodeling. The INO80 complex remodels chromatin by shifting nucleosomes and is involved in DNA repair. Also involved in pre-rRNA processing. In Neurospora crassa (strain ATCC 24698 / 74-OR23-1A / CBS 708.71 / DSM 1257 / FGSC 987), this protein is RuvB-like helicase 1 (hel-1).